Consider the following 235-residue polypeptide: Phosphoribosylaminoimidazole-succinocarboxamide synthase (235 aa).

It belongs to the SAICAR synthetase family.

It carries out the reaction 5-amino-1-(5-phospho-D-ribosyl)imidazole-4-carboxylate + L-aspartate + ATP = (2S)-2-[5-amino-1-(5-phospho-beta-D-ribosyl)imidazole-4-carboxamido]succinate + ADP + phosphate + 2 H(+). It functions in the pathway purine metabolism; IMP biosynthesis via de novo pathway; 5-amino-1-(5-phospho-D-ribosyl)imidazole-4-carboxamide from 5-amino-1-(5-phospho-D-ribosyl)imidazole-4-carboxylate: step 1/2. The chain is Phosphoribosylaminoimidazole-succinocarboxamide synthase from Clostridium beijerinckii (strain ATCC 51743 / NCIMB 8052) (Clostridium acetobutylicum).